We begin with the raw amino-acid sequence, 451 residues long: IMP-specific 5'-nucleotidase 1 (451 aa).

The Nucleophile role is filled by D153. 6 residues coordinate IMP: D153, D155, D161, T189, D377, and K385. The Mg(2+) site is built by D153 and D155. D155 functions as the Proton donor in the catalytic mechanism. D409 contributes to the Mg(2+) binding site.

Belongs to the ISN1 family. Homotetramer. Mg(2+) serves as cofactor.

It carries out the reaction IMP + H2O = inosine + phosphate. With respect to regulation, allosterically activated by ATP. ATP binding is a prerequisite to magnesium and substrate binding. ATP binds to 2 of the subunits in the homotetramer inducing a closure of these 2 subunits and the release of the C-terminal loop, thereby activating the enzyme. Its function is as follows. IMP-specific 5'-nucleotidase involved in IMP (inositol monophosphate) degradation. This chain is IMP-specific 5'-nucleotidase 1 (isn1), found in Emericella nidulans (strain FGSC A4 / ATCC 38163 / CBS 112.46 / NRRL 194 / M139) (Aspergillus nidulans).